Consider the following 219-residue polypeptide: Charged multivesicular body protein 5 (219 aa).

Positions 22–153 (TNVDGRAESI…EIQEALSRSY (132 aa)) form a coiled coil.

It belongs to the SNF7 family. Probable peripherally associated component of the endosomal sorting required for transport complex III (ESCRT-III).

The protein localises to the cytoplasm. It is found in the cytosol. It localises to the endosome membrane. Its function is as follows. Probable peripherally associated component of the endosomal sorting required for transport complex III (ESCRT-III) which is involved in multivesicular bodies (MVBs) formation and sorting of endosomal cargo proteins into MVBs. MVBs contain intraluminal vesicles (ILVs) that are generated by invagination and scission from the limiting membrane of the endosome and mostly are delivered to lysosomes enabling degradation of membrane proteins, such as stimulated growth factor receptors, lysosomal enzymes and lipids. The chain is Charged multivesicular body protein 5 (chmp5) from Xenopus laevis (African clawed frog).